A 304-amino-acid polypeptide reads, in one-letter code: ATP phosphoribosyltransferase (304 aa).

It belongs to the ATP phosphoribosyltransferase family. Long subfamily. The cofactor is Mg(2+).

The protein resides in the cytoplasm. The catalysed reaction is 1-(5-phospho-beta-D-ribosyl)-ATP + diphosphate = 5-phospho-alpha-D-ribose 1-diphosphate + ATP. The protein operates within amino-acid biosynthesis; L-histidine biosynthesis; L-histidine from 5-phospho-alpha-D-ribose 1-diphosphate: step 1/9. Its activity is regulated as follows. Feedback inhibited by histidine. Catalyzes the condensation of ATP and 5-phosphoribose 1-diphosphate to form N'-(5'-phosphoribosyl)-ATP (PR-ATP). Has a crucial role in the pathway because the rate of histidine biosynthesis seems to be controlled primarily by regulation of HisG enzymatic activity. The chain is ATP phosphoribosyltransferase from Xanthomonas campestris pv. campestris (strain 8004).